A 615-amino-acid chain; its full sequence is Aspartokinase (615 aa).

Disordered stretches follow at residues 84–105 and 127–171; these read ALQPAMSSSGDGRSGSMSGTAT and SSVS…SISQ. Composition is skewed to low complexity over residues 90–102 and 127–164; these read SSSGDGRSGSMSG and SSVSSLSQLESQLGRSGSPSPFQSSSSRSPPRSPATPS. An ACT domain is found at 467–537; sequence IHSNRKTLSH…EVTVSKDMAI (71 aa).

The protein belongs to the aspartokinase family.

It catalyses the reaction L-aspartate + ATP = 4-phospho-L-aspartate + ADP. Its pathway is amino-acid biosynthesis; L-methionine biosynthesis via de novo pathway; L-homoserine from L-aspartate: step 1/3. It functions in the pathway amino-acid biosynthesis; L-threonine biosynthesis; L-threonine from L-aspartate: step 1/5. In terms of biological role, phosphorylates aspartate, the first step in the biosynthesis of amino acids that derive from aspartate (the aspartate family of amino acids), including methioinine and threonine, the latter of which is a precursor to isoleucine. The sequence is that of Aspartokinase from Cryptococcus neoformans var. grubii serotype A (strain H99 / ATCC 208821 / CBS 10515 / FGSC 9487) (Filobasidiella neoformans var. grubii).